The following is a 146-amino-acid chain: Snaclec 1 (146 aa).

Positions 1 to 23 (MGRFIFMSFGLLVVFLSLSGTGA) are cleaved as a signal peptide. Disulfide bonds link cysteine 25/cysteine 36, cysteine 53/cysteine 142, and cysteine 119/cysteine 134. A C-type lectin domain is found at 32-143 (YEGHCYRVFQ…CSRTYSFVCK (112 aa)).

This sequence belongs to the snaclec family. In terms of assembly, heterodimer; disulfide-linked. As to expression, expressed by the venom gland.

Its subcellular location is the secreted. Functionally, interferes with one step of hemostasis (modulation of platelet aggregation, or coagulation cascade, for example). The chain is Snaclec 1 from Sistrurus catenatus edwardsii (Desert massasauga).